Reading from the N-terminus, the 467-residue chain is ATP synthase subunit beta (467 aa).

154–161 (GGAGVGKT) serves as a coordination point for ATP.

It belongs to the ATPase alpha/beta chains family. As to quaternary structure, F-type ATPases have 2 components, CF(1) - the catalytic core - and CF(0) - the membrane proton channel. CF(1) has five subunits: alpha(3), beta(3), gamma(1), delta(1), epsilon(1). CF(0) has three main subunits: a(1), b(2) and c(9-12). The alpha and beta chains form an alternating ring which encloses part of the gamma chain. CF(1) is attached to CF(0) by a central stalk formed by the gamma and epsilon chains, while a peripheral stalk is formed by the delta and b chains.

The protein localises to the cell inner membrane. The catalysed reaction is ATP + H2O + 4 H(+)(in) = ADP + phosphate + 5 H(+)(out). Functionally, produces ATP from ADP in the presence of a proton gradient across the membrane. The catalytic sites are hosted primarily by the beta subunits. The protein is ATP synthase subunit beta of Leptospira borgpetersenii serovar Hardjo-bovis (strain JB197).